We begin with the raw amino-acid sequence, 265 residues long: NAD kinase 2 (265 aa).

The active-site Proton acceptor is Asn-51. NAD(+) is bound by residues Asn-122–Glu-123, Arg-149, Asp-151, Thr-162–Ser-167, Ala-186, and Asn-226.

The protein belongs to the NAD kinase family. The cofactor is a divalent metal cation.

Its subcellular location is the cytoplasm. The catalysed reaction is NAD(+) + ATP = ADP + NADP(+) + H(+). Involved in the regulation of the intracellular balance of NAD and NADP, and is a key enzyme in the biosynthesis of NADP. Catalyzes specifically the phosphorylation on 2'-hydroxyl of the adenosine moiety of NAD to yield NADP. This Halalkalibacterium halodurans (strain ATCC BAA-125 / DSM 18197 / FERM 7344 / JCM 9153 / C-125) (Bacillus halodurans) protein is NAD kinase 2.